A 196-amino-acid polypeptide reads, in one-letter code: DnaA initiator-associating protein DiaA (196 aa).

One can recognise an SIS domain in the interval 34–196; the sequence is LVQSLLNGNK…DSTLFPHQDE (163 aa).

Belongs to the SIS family. DiaA subfamily. As to quaternary structure, homotetramer; dimer of dimers.

Functionally, required for the timely initiation of chromosomal replication via direct interactions with the DnaA initiator protein. The polypeptide is DnaA initiator-associating protein DiaA (Serratia proteamaculans (strain 568)).